The following is a 192-amino-acid chain: Sporulation initiation phosphotransferase B (192 aa).

His-30 carries the phosphohistidine modification.

In terms of assembly, homodimer. Dimerization is essential for activity as both monomers contribute to the formation of the active site. In terms of processing, phosphorylated by spo0F.

It localises to the cytoplasm. In terms of biological role, key element in the phosphorelay regulating sporulation initiation. Acts on spo0A. Mediates reversible phosphoryl transfer from spo0F to spo0A. This chain is Sporulation initiation phosphotransferase B (spo0B), found in Bacillus subtilis (strain 168).